The primary structure comprises 56 residues: Large ribosomal subunit protein bL33A (56 aa).

The protein belongs to the bacterial ribosomal protein bL33 family.

In Cutibacterium acnes (strain DSM 16379 / KPA171202) (Propionibacterium acnes), this protein is Large ribosomal subunit protein bL33A.